Reading from the N-terminus, the 186-residue chain is Ribosome-recycling factor (186 aa).

It belongs to the RRF family.

Its subcellular location is the cytoplasm. Its function is as follows. Responsible for the release of ribosomes from messenger RNA at the termination of protein biosynthesis. May increase the efficiency of translation by recycling ribosomes from one round of translation to another. The protein is Ribosome-recycling factor of Rhizobium leguminosarum bv. trifolii (strain WSM2304).